The chain runs to 459 residues: MTGRAMDPLPSPAVAAAAEAEADEEADPPATGPRTSQVTEWRALDPGRMQMPQGNPLLLSYTLQELLAKDTVQVELIPEKKGLFLKHVEYEVSSQRFKSSVYRRYNDFVVFHEVLLHKFPYRMVPALPPKRVLGADREFIEGRRRALKRFINLVARHPPFSEDVLLKLFLSFSGSDVQHKLKEAAQCVGDEFMNCKLAARAKDFLPADIQTQFAMSRELIRNVYNSFYKLRDRAERIASRAIDNAADLLIFGKELSALGSDTTPLPSWAALHLSTWGSLKQALKGLSVEFALLADRAAQQGKKEENDVVEKLNLFLDLLQSYKDLCERHEKGVLHKHQRALHKYGLMKRQMMSAAHGREPESVEQLESRIVEQENVIQTMELRNYFSLYCLHQETQLVHVYLPLTSHILGAFVNSQIQGHKEMSKVWNDLKPKLSCLFAGPHSVLTPPRSPQEDGVCPH.

A disordered region spans residues 1 to 37; sequence MTGRAMDPLPSPAVAAAAEAEADEEADPPATGPRTSQ. The PX domain maps to 68 to 176; sequence AKDTVQVELI…KLFLSFSGSD (109 aa). Residues R104, K130, and R143 each coordinate a 1,2-diacyl-sn-glycero-3-phospho-(1D-myo-inositol-3-phosphate). T446 carries the post-translational modification Phosphothreonine. At S450 the chain carries Phosphoserine.

This sequence belongs to the sorting nexin family.

It is found in the early endosome membrane. Functionally, may be involved in several stages of intracellular trafficking. May play a role in intracellular protein transport from early endosomes to the trans-Golgi network. This is Sorting nexin-8 (Snx8) from Mus musculus (Mouse).